A 176-amino-acid chain; its full sequence is Peroxynitrite isomerase 1 (176 aa).

The segment at 1 to 23 (MDENSTLSPAHSDAAASSSANTP) is disordered. Residues 8–20 (SPAHSDAAASSSA) show a composition bias toward low complexity. The short motif at 37–43 (GLWRGEG) is the GXWXGXG element. Residue histidine 168 participates in heme b binding.

This sequence belongs to the nitrobindin family. Homodimer. Heme b serves as cofactor.

It carries out the reaction peroxynitrite = nitrate. The protein operates within nitrogen metabolism. Heme-binding protein able to scavenge peroxynitrite and to protect free L-tyrosine against peroxynitrite-mediated nitration, by acting as a peroxynitrite isomerase that converts peroxynitrite to nitrate. Therefore, this protein likely plays a role in peroxynitrite sensing and in the detoxification of reactive nitrogen and oxygen species (RNS and ROS, respectively). Is able to bind nitric oxide (NO) in vitro, but may act as a sensor of peroxynitrite levels in vivo. The chain is Peroxynitrite isomerase 1 from Rhodococcus jostii (strain RHA1).